The chain runs to 2341 residues: Pecanex-like protein 1 (2341 aa).

Helical transmembrane passes span 28–50 (ATFV…FTLY) and 57–74 (MIIV…FIVL). The segment at 98–163 (FTDQRTKAEQ…SNQIGSGSSR (66 aa)) is disordered. N-linked (GlcNAc...) asparagine glycosylation occurs at Asn109. Over residues 143 to 163 (SSRNSYAGLDPSNQIGSGSSR) the composition is skewed to polar residues. Asn215 is a glycosylation site (N-linked (GlcNAc...) asparagine). Disordered stretches follow at residues 270–294 (HSHS…VAFP), 311–331 (DPVS…SLVE), and 344–689 (DLKI…TRAR). A compositionally biased stretch (basic residues) spans 272-282 (HSYRKDHRPRG). Composition is skewed to polar residues over residues 320–331 (KPLSGSKESLVE) and 347–356 (INTSQPPTKS). N-linked (GlcNAc...) asparagine glycosylation is present at Asn348. A compositionally biased stretch (low complexity) spans 370–388 (SLRSLSTRSSGSTESYCSG). An N-linked (GlcNAc...) asparagine glycan is attached at Asn394. Polar residues predominate over residues 394-404 (NSTVSSYKSEQ). 3 stretches are compositionally biased toward basic and acidic residues: residues 430 to 455 (KKEC…EKIA), 465 to 478 (HEAK…EMHN), and 527 to 544 (SKVR…DVRP). Residues 554–569 (ASAHKSGRRRTGKKRA) are compositionally biased toward basic residues. Positions 605–635 (QSDLSRASSVQSAHQFSSDSSSSTTSHSCQS) are enriched in low complexity. N-linked (GlcNAc...) asparagine glycosylation occurs at Asn702. A disordered region spans residues 756–834 (QVAFPEGEEQ…STAQVKVQSR (79 aa)). Residues 814–832 (LSLQDGQQGQQSTAQVKVQ) are compositionally biased toward low complexity. Residues Asn852 and Asn863 are each glycosylated (N-linked (GlcNAc...) asparagine). 3 helical membrane-spanning segments follow: residues 1003–1025 (ILEN…ILLI), 1032–1049 (IWVF…YSLL), and 1067–1089 (IAYS…DYGS). Residue Asn1091 is glycosylated (N-linked (GlcNAc...) asparagine). Residues 1110-1132 (FISARDLVIVFTLCFPIVFFIGL) traverse the membrane as a helical segment. An N-linked (GlcNAc...) asparagine glycan is attached at Asn1155. 4 helical membrane passes run 1160 to 1182 (LLAA…GLCY), 1194 to 1213 (IPVL…YHLS), 1266 to 1288 (LVVC…FTVL), and 1295 to 1312 (VLYT…YVLP). Residues Asn1579, Asn1720, Asn1982, Asn2062, and Asn2072 are each glycosylated (N-linked (GlcNAc...) asparagine). 2 disordered regions span residues 2062-2120 (NATT…SPAR) and 2217-2237 (GQSS…NNSH). 3 stretches are compositionally biased toward polar residues: residues 2069–2078 (PHSNVTQGSI), 2096–2114 (YPPT…SGLV), and 2217–2236 (GQSS…ANNS). N-linked (GlcNAc...) asparagine glycosylation is found at Asn2234 and Asn2260.

The protein belongs to the pecanex family.

Its subcellular location is the membrane. The polypeptide is Pecanex-like protein 1 (Homo sapiens (Human)).